Reading from the N-terminus, the 339-residue chain is Ketol-acid reductoisomerase (NADP(+)) (339 aa).

In terms of domain architecture, KARI N-terminal Rossmann spans 1–182; it reads MRVYYDRDAD…GGGRAGIIET (182 aa). NADP(+)-binding positions include 24 to 27, R48, S51, T53, and 83 to 86; these read YGSQ and DELQ. The active site involves H108. G134 is an NADP(+) binding site. In terms of domain architecture, KARI C-terminal knotted spans 183–328; sequence TFKEECETDL…AKLRGMMPWI (146 aa). Mg(2+)-binding residues include D191, E195, E227, and E231. A substrate-binding site is contributed by S252.

This sequence belongs to the ketol-acid reductoisomerase family. Requires Mg(2+) as cofactor.

It carries out the reaction (2R)-2,3-dihydroxy-3-methylbutanoate + NADP(+) = (2S)-2-acetolactate + NADPH + H(+). It catalyses the reaction (2R,3R)-2,3-dihydroxy-3-methylpentanoate + NADP(+) = (S)-2-ethyl-2-hydroxy-3-oxobutanoate + NADPH + H(+). The protein operates within amino-acid biosynthesis; L-isoleucine biosynthesis; L-isoleucine from 2-oxobutanoate: step 2/4. It functions in the pathway amino-acid biosynthesis; L-valine biosynthesis; L-valine from pyruvate: step 2/4. Functionally, involved in the biosynthesis of branched-chain amino acids (BCAA). Catalyzes an alkyl-migration followed by a ketol-acid reduction of (S)-2-acetolactate (S2AL) to yield (R)-2,3-dihydroxy-isovalerate. In the isomerase reaction, S2AL is rearranged via a Mg-dependent methyl migration to produce 3-hydroxy-3-methyl-2-ketobutyrate (HMKB). In the reductase reaction, this 2-ketoacid undergoes a metal-dependent reduction by NADPH to yield (R)-2,3-dihydroxy-isovalerate. In Methylorubrum extorquens (strain CM4 / NCIMB 13688) (Methylobacterium extorquens), this protein is Ketol-acid reductoisomerase (NADP(+)).